The primary structure comprises 528 residues: GMP synthase [glutamine-hydrolyzing] (528 aa).

Positions 13–204 constitute a Glutamine amidotransferase type-1 domain; that stretch reads SILILDFGSQ…VYKISCCTAD (192 aa). Residue Cys90 is the Nucleophile of the active site. Active-site residues include His178 and Glu180. Residues 205–403 form the GMPS ATP-PPase domain; the sequence is WTTETYIEET…LGLPDEIIKR (199 aa). 232–238 lines the ATP pocket; the sequence is SGGVDSS.

In terms of assembly, homodimer.

The enzyme catalyses XMP + L-glutamine + ATP + H2O = GMP + L-glutamate + AMP + diphosphate + 2 H(+). It functions in the pathway purine metabolism; GMP biosynthesis; GMP from XMP (L-Gln route): step 1/1. Its function is as follows. Catalyzes the synthesis of GMP from XMP. This Prochlorococcus marinus (strain AS9601) protein is GMP synthase [glutamine-hydrolyzing].